The sequence spans 668 residues: Phosphatidylinositol 4-phosphate 5-kinase type-1 gamma (668 aa).

The segment at Ser45 to Gly67 is disordered. The region spanning Thr75 to Val443 is the PIPK domain. Residues Lys265 and Lys268 each carry the N6-acetyllysine modification. Asymmetric dimethylarginine; alternate is present on Arg459. Residue Arg459 is modified to Omega-N-methylarginine; alternate. Low complexity predominate over residues Thr526–Ile535. Disordered stretches follow at residues Thr526 to Gln578 and Glu593 to Thr642. Ser555 is subject to Phosphoserine. Tyr639 bears the Phosphotyrosine; by EGFR mark. The tract at residues Pro641–Thr668 is mediates interaction with TLN2. Position 649 is a phosphotyrosine; by CSK (Tyr649). Ser650 carries the phosphoserine; by CDK5, MAPK1 and CDK1 modification. Ser662 and Ser666 each carry phosphoserine. Position 668 is a phosphothreonine (Thr668).

As to quaternary structure, interacts with TLN1. Interacts with TLN2; interaction stimulates 1-phosphatidylinositol-4-phosphate 5-kinase activity. May compete with beta-integrins for the same binding site on TLN1 and TLN2. Interacts with ARF6; interaction stimulates 1-phosphatidylinositol-4-phosphate 5-kinase activity. Interacts with AP2B1. Interacts with AP2M1; phosphorylation of PIP5K1C by CSK disrupts the interaction; clathrin competes with PIP5K1C. Interacts with CDH1. Interacts with CSK. Interacts with PLCG1; interaction is abolished upon EGF stimulation. Interacts with LAPTM4B; promotes SNX5 association with LAPTM4B; kinase activity of PIP5K1C is required; interaction is regulated by phosphatidylinositol 4,5-bisphosphate generated by PIP5K1C. Phosphorylation on Ser-650 negatively regulates binding to TLN2 and is strongly stimulated in mitosis. Phosphorylation on Tyr-649 is necessary for targeting to focal adhesions. Phosphorylation on Ser-650 and Tyr-649 are mutually exclusive. Phosphorylated by SYK and CSK. Tyrosine phosphorylation is enhanced by PTK2 signaling. Phosphorylated at Tyr-639 upon EGF stimulation. Some studies suggest that phosphorylation on Tyr-649 enhances binding to tailins (TLN1 and TLN2). According to PubMed:15738269 phosphorylation at Tyr-649 does not directly enhance binding to tailins (TLN1 and TLN2) but may act indirectly by inhibiting phosphorylation at Ser-650. In terms of processing, acetylation at Lys-265 and Lys-268 seems to decrease lipid 1-phosphatidylinositol-4-phosphate 5-kinase activity. Deacetylation of these sites by SIRT1 positively regulates the exocytosis of TSH-containing granules from pituitary cells. As to expression, isoform 1 is strongly expressed in brain and also detected in heart and lung. In terms of tissue distribution, isoform 2 is strongly expressed in pancreas and liver and in lesser quantities in brain, heart, lung and kidney. Isoform 3 is detected in large amounts in heart and large intestine, is also present in lung, pancreas and thyroid, and to a lesser extent in brain, stomach and kidney.

Its subcellular location is the cell membrane. It localises to the endomembrane system. The protein resides in the cytoplasm. The protein localises to the cell junction. It is found in the focal adhesion. Its subcellular location is the adherens junction. It localises to the cell projection. The protein resides in the ruffle membrane. The protein localises to the phagocytic cup. It is found in the uropodium. Its subcellular location is the nucleus. It catalyses the reaction a 1,2-diacyl-sn-glycero-3-phospho-(1D-myo-inositol 4-phosphate) + ATP = a 1,2-diacyl-sn-glycero-3-phospho-(1D-myo-inositol-4,5-bisphosphate) + ADP + H(+). The catalysed reaction is 1-octadecanoyl-2-(5Z,8Z,11Z,14Z)-eicosatetraenoyl-sn-glycero-3-phospho-1D-myo-inositol 4-phosphate + ATP = 1-octadecanoyl-2-(5Z,8Z,11Z,14Z)-eicosatetraenoyl-sn-glycero-3-phospho-1D-myo-inositol 4,5-bisphosphate + ADP + H(+). It carries out the reaction 1-octadecanoyl-2-(9Z)-octadecenoyl-sn-glycero-3-phospho-1D-myo-inositol 4-phosphate + ATP = 1-octadecanoyl-2-(9Z)-octadecenoyl-sn-glycero-3-phospho-1D-myo-inositol 4,5-bisphosphate + ADP + H(+). The enzyme catalyses 1-octadecanoyl-2-(9Z)-octadecenoyl-sn-glycero-3-phospho-1D-myo-inositol + ATP = 1-octadecanoyl-2-(9Z)-octadecenoyl-sn-glycero-3-phospho-1D-myo-inositol 5-phosphate + ADP + H(+). It catalyses the reaction 1-octadecanoyl-2-(9Z,12Z)-octadecadienoyl-sn-glycero-3-phospho-1D-myo-inositol + ATP = 1-octadecanoyl-2-(9Z,12Z)-octadecadienoyl-sn-glycero-3-phospho-1D-myo-inositol 5-phosphate + ADP + H(+). The catalysed reaction is 1-octadecanoyl-2-(5Z,8Z,11Z,14Z-eicosatetraenoyl)-sn-glycero-3-phospho-(1D-myo-inositol) + ATP = 1-octadecanoyl-2-(5Z,8Z,11Z,14Z)-eicosatetraenoyl-sn-glycero-3-phospho-1D-myo-inositol 5-phosphate + ADP + H(+). It carries out the reaction 1,2-di-(9Z,12Z)-octadecadienoyl-sn-glycero-3-phospho-1D-myo-inositol + ATP = 1,2-di(9Z,12Z)-octadecadienoyl-sn-glycero-3-phospho-1D-myo-inositol 5-phosphate + ADP + H(+). Functionally, catalyzes the phosphorylation of phosphatidylinositol 4-phosphate (PtdIns(4)P/PI4P) to form phosphatidylinositol 4,5-bisphosphate (PtdIns(4,5)P2/PIP2), a lipid second messenger that regulates several cellular processes such as signal transduction, vesicle trafficking, actin cytoskeleton dynamics, cell adhesion, and cell motility. PtdIns(4,5)P2 can directly act as a second messenger or can be utilized as a precursor to generate other second messengers: inositol 1,4,5-trisphosphate (IP3), diacylglycerol (DAG) or phosphatidylinositol-3,4,5-trisphosphate (PtdIns(3,4,5)P3/PIP3). PIP5K1A-mediated phosphorylation of PtdIns(4)P is the predominant pathway for PtdIns(4,5)P2 synthesis. Together with PIP5K1A, is required for phagocytosis, both enzymes regulating different types of actin remodeling at sequential steps. Promotes particle attachment by generating the pool of PtdIns(4,5)P2 that induces controlled actin depolymerization to facilitate Fc-gamma-R clustering. Mediates RAC1-dependent reorganization of actin filaments. Required for synaptic vesicle transport. Controls the plasma membrane pool of PtdIns(4,5)P2 implicated in synaptic vesicle endocytosis and exocytosis. Plays a role in endocytosis mediated by clathrin and AP-2 (adaptor protein complex 2). Required for clathrin-coated pits assembly at the synapse. Participates in cell junction assembly. Modulates adherens junctions formation by facilitating CDH1/cadherin trafficking. Required for focal adhesion dynamics. Modulates the targeting of talins (TLN1 and TLN2) to the plasma membrane and their efficient assembly into focal adhesions. Regulates the interaction between talins (TLN1 and TLN2) and beta-integrins. Required for uropodium formation and retraction of the cell rear during directed migration. Has a role in growth factor-stimulated directional cell migration and adhesion. Required for talin assembly into nascent adhesions forming at the leading edge toward the direction of the growth factor. Negative regulator of T-cell activation and adhesion. Negatively regulates integrin alpha-L/beta-2 (LFA-1) polarization and adhesion induced by T-cell receptor. Together with PIP5K1A has a role during embryogenesis and together with PIP5K1B may have a role immediately after birth. This chain is Phosphatidylinositol 4-phosphate 5-kinase type-1 gamma, found in Homo sapiens (Human).